A 275-amino-acid polypeptide reads, in one-letter code: Putative pyruvate, phosphate dikinase regulatory protein (275 aa).

151 to 158 (GVSRTSKT) contributes to the ADP binding site.

This sequence belongs to the pyruvate, phosphate/water dikinase regulatory protein family. PDRP subfamily.

The catalysed reaction is N(tele)-phospho-L-histidyl/L-threonyl-[pyruvate, phosphate dikinase] + ADP = N(tele)-phospho-L-histidyl/O-phospho-L-threonyl-[pyruvate, phosphate dikinase] + AMP + H(+). It catalyses the reaction N(tele)-phospho-L-histidyl/O-phospho-L-threonyl-[pyruvate, phosphate dikinase] + phosphate + H(+) = N(tele)-phospho-L-histidyl/L-threonyl-[pyruvate, phosphate dikinase] + diphosphate. Functionally, bifunctional serine/threonine kinase and phosphorylase involved in the regulation of the pyruvate, phosphate dikinase (PPDK) by catalyzing its phosphorylation/dephosphorylation. This chain is Putative pyruvate, phosphate dikinase regulatory protein, found in Rhodospirillum rubrum (strain ATCC 11170 / ATH 1.1.1 / DSM 467 / LMG 4362 / NCIMB 8255 / S1).